Reading from the N-terminus, the 386-residue chain is CUE domain-containing protein 1 (386 aa).

The span at 1 to 10 (MTSLFRRSSS) shows a compositional bias: low complexity. Positions 1 to 40 (MTSLFRRSSSGSGGGGTAGARGGGGGTAAPQELNNSRPAR) are disordered. The span at 11–27 (GSGGGGTAGARGGGGGT) shows a compositional bias: gly residues. The CUE domain occupies 46–89 (EFNQAMDDFKTMFPNMDYDIIECVLRANSGAVDATIDQLLQMNL). Disordered regions lie at residues 147–172 (LAPP…RYRN), 195–225 (SIQG…DQES), and 367–386 (DFRG…REGQ). The segment covering 199-209 (NAGGPKPGSGE) has biased composition (gly residues).

In Homo sapiens (Human), this protein is CUE domain-containing protein 1 (CUEDC1).